A 309-amino-acid polypeptide reads, in one-letter code: Dehydrogenase/reductase SDR family member 7B (309 aa).

Over 1–5 (MERAL) the chain is Cytoplasmic. The helical; Signal-anchor for type II membrane protein transmembrane segment at 6–26 (GVGIGPLAAGTVGLLILLKVI) threads the bilayer. The Lumenal segment spans residues 27-271 (QRLRRRPNIQ…LKAVCQKKKD (245 aa)). Residues Ser-47 and Leu-49 each contribute to the NAD(+) site. Ser-179 lines the substrate pocket. NAD(+) is bound by residues Tyr-192, Lys-196, and Thr-227. The active-site Proton acceptor is Tyr-192.

The protein belongs to the short-chain dehydrogenases/reductases (SDR) family.

It is found in the endoplasmic reticulum membrane. Putative oxidoreductase. This chain is Dehydrogenase/reductase SDR family member 7B (dhrs7b), found in Danio rerio (Zebrafish).